The following is a 109-amino-acid chain: Spermidine export protein MdtI (109 aa).

Helical transmembrane passes span 6–26 (FYHIAFLILAVILEIIANILL), 35–55 (VWLGILSLLSVLGAFSALAQA), 64–84 (AYALWGGFGIAATVAAGWILF), and 88–108 (LNYKGWIGLILLLAGMVMIKL).

The protein belongs to the drug/metabolite transporter (DMT) superfamily. Small multidrug resistance (SMR) (TC 2.A.7.1) family. MdtI subfamily. As to quaternary structure, forms a complex with MdtJ.

The protein localises to the cell inner membrane. In terms of biological role, catalyzes the excretion of spermidine. This Yersinia enterocolitica serotype O:8 / biotype 1B (strain NCTC 13174 / 8081) protein is Spermidine export protein MdtI.